The sequence spans 436 residues: GTPase Der (436 aa).

EngA-type G domains lie at 4–167 (PVVA…PKEE) and 176–351 (VKFS…DNHS). GTP contacts are provided by residues 10 to 17 (GRPNVGKS), 57 to 61 (DTGGI), 119 to 122 (NKVD), 182 to 189 (GRPNVGKS), 229 to 233 (DTAGM), and 294 to 297 (NKWD). Residues 352-436 (LRVQSSMLND…PIRVIARKRK (85 aa)) enclose the KH-like domain.

This sequence belongs to the TRAFAC class TrmE-Era-EngA-EngB-Septin-like GTPase superfamily. EngA (Der) GTPase family. In terms of assembly, associates with the 50S ribosomal subunit.

GTPase that plays an essential role in the late steps of ribosome biogenesis. This Listeria welshimeri serovar 6b (strain ATCC 35897 / DSM 20650 / CCUG 15529 / CIP 8149 / NCTC 11857 / SLCC 5334 / V8) protein is GTPase Der.